A 115-amino-acid polypeptide reads, in one-letter code: ATP-dependent Clp protease adapter protein ClpS (115 aa).

The protein belongs to the ClpS family. In terms of assembly, binds to the N-terminal domain of the chaperone ClpA.

Involved in the modulation of the specificity of the ClpAP-mediated ATP-dependent protein degradation. This Leptothrix cholodnii (strain ATCC 51168 / LMG 8142 / SP-6) (Leptothrix discophora (strain SP-6)) protein is ATP-dependent Clp protease adapter protein ClpS.